A 477-amino-acid chain; its full sequence is Ribulose bisphosphate carboxylase large chain (477 aa).

Positions 1–2 (MS) are excised as a propeptide. At P3 the chain carries N-acetylproline. K14 bears the N6,N6,N6-trimethyllysine mark. Substrate is bound by residues N123 and T173. The Proton acceptor role is filled by K175. K177 lines the substrate pocket. The Mg(2+) site is built by K201, D203, and E204. Position 201 is an N6-carboxylysine (K201). H294 serves as the catalytic Proton acceptor. The substrate site is built by R295, H327, and S379.

It belongs to the RuBisCO large chain family. Type I subfamily. Heterohexadecamer of 8 large chains and 8 small chains; disulfide-linked. The disulfide link is formed within the large subunit homodimers. Mg(2+) serves as cofactor. Post-translationally, the disulfide bond which can form in the large chain dimeric partners within the hexadecamer appears to be associated with oxidative stress and protein turnover.

It localises to the plastid. The protein localises to the chloroplast. It carries out the reaction 2 (2R)-3-phosphoglycerate + 2 H(+) = D-ribulose 1,5-bisphosphate + CO2 + H2O. The enzyme catalyses D-ribulose 1,5-bisphosphate + O2 = 2-phosphoglycolate + (2R)-3-phosphoglycerate + 2 H(+). In terms of biological role, ruBisCO catalyzes two reactions: the carboxylation of D-ribulose 1,5-bisphosphate, the primary event in carbon dioxide fixation, as well as the oxidative fragmentation of the pentose substrate in the photorespiration process. Both reactions occur simultaneously and in competition at the same active site. In Nicotiana otophora (Tobacco), this protein is Ribulose bisphosphate carboxylase large chain.